Here is a 605-residue protein sequence, read N- to C-terminus: Granule-bound starch synthase 1, chloroplastic/amyloplastic (605 aa).

The N-terminal 72 residues, 1–72 (MAALATSQLV…GGRFPSLVVC (72 aa)), are a transit peptide targeting the chloroplast. ADP-alpha-D-glucose is bound at residue lysine 91.

This sequence belongs to the glycosyltransferase 1 family. Bacterial/plant glycogen synthase subfamily.

Its subcellular location is the plastid. It is found in the chloroplast. The protein resides in the amyloplast. It catalyses the reaction an NDP-alpha-D-glucose + [(1-&gt;4)-alpha-D-glucosyl](n) = [(1-&gt;4)-alpha-D-glucosyl](n+1) + a ribonucleoside 5'-diphosphate + H(+). It functions in the pathway glycan biosynthesis; starch biosynthesis. Its function is as follows. Required for the synthesis of amylose in endosperm. This is Granule-bound starch synthase 1, chloroplastic/amyloplastic (WAXY) from Zea mays (Maize).